The chain runs to 110 residues: T cell receptor alpha variable 35 (110 aa).

The first 19 residues, 1-19 (MLLEHLLIILWMQLTWVSG), serve as a signal peptide directing secretion. Positions 20-110 (QQLNQSPQSM…DVGIYFCAGQ (91 aa)) constitute an Ig-like domain. N-linked (GlcNAc...) asparagine glycans are attached at residues Asn40 and Asn93. A disulfide bond links Cys41 and Cys107.

In terms of assembly, alpha-beta TR is a heterodimer composed of an alpha and beta chain; disulfide-linked. The alpha-beta TR is associated with the transmembrane signaling CD3 coreceptor proteins to form the TR-CD3 (TcR or TCR). The assembly of alpha-beta TR heterodimers with CD3 occurs in the endoplasmic reticulum where a single alpha-beta TR heterodimer associates with one CD3D-CD3E heterodimer, one CD3G-CD3E heterodimer and one CD247 homodimer forming a stable octameric structure. CD3D-CD3E and CD3G-CD3E heterodimers preferentially associate with TR alpha and TR beta chains, respectively. The association of the CD247 homodimer is the last step of TcR assembly in the endoplasmic reticulum and is required for transport to the cell surface.

Its subcellular location is the cell membrane. Its function is as follows. V region of the variable domain of T cell receptor (TR) alpha chain that participates in the antigen recognition. Alpha-beta T cell receptors are antigen specific receptors which are essential to the immune response and are present on the cell surface of T lymphocytes. Recognize peptide-major histocompatibility (MH) (pMH) complexes that are displayed by antigen presenting cells (APC), a prerequisite for efficient T cell adaptive immunity against pathogens. Binding of alpha-beta TR to pMH complex initiates TR-CD3 clustering on the cell surface and intracellular activation of LCK that phosphorylates the ITAM motifs of CD3G, CD3D, CD3E and CD247 enabling the recruitment of ZAP70. In turn ZAP70 phosphorylates LAT, which recruits numerous signaling molecules to form the LAT signalosome. The LAT signalosome propagates signal branching to three major signaling pathways, the calcium, the mitogen-activated protein kinase (MAPK) kinase and the nuclear factor NF-kappa-B (NF-kB) pathways, leading to the mobilization of transcription factors that are critical for gene expression and essential for T cell growth and differentiation. The T cell repertoire is generated in the thymus, by V-(D)-J rearrangement. This repertoire is then shaped by intrathymic selection events to generate a peripheral T cell pool of self-MH restricted, non-autoaggressive T cells. Post-thymic interaction of alpha-beta TR with the pMH complexes shapes TR structural and functional avidity. The sequence is that of T cell receptor alpha variable 35 from Homo sapiens (Human).